A 300-amino-acid polypeptide reads, in one-letter code: D-alanine--D-alanine ligase (300 aa).

The ATP-grasp domain occupies 99–293 (KKILKYANIN…FAELLNSIVK (195 aa)). 126–181 (IEKIGYPVFVKPNSGGSSVATNLVKDKEGIKEAVELALKYDKEVMIENYTKGEEIT) contributes to the ATP binding site. The Mg(2+) site is built by aspartate 248, glutamate 260, and asparagine 262.

This sequence belongs to the D-alanine--D-alanine ligase family. Requires Mg(2+) as cofactor. It depends on Mn(2+) as a cofactor.

Its subcellular location is the cytoplasm. The enzyme catalyses 2 D-alanine + ATP = D-alanyl-D-alanine + ADP + phosphate + H(+). It participates in cell wall biogenesis; peptidoglycan biosynthesis. In terms of biological role, cell wall formation. This is D-alanine--D-alanine ligase from Clostridium botulinum (strain ATCC 19397 / Type A).